The following is a 483-amino-acid chain: UDP-N-acetylmuramate--L-alanine ligase (483 aa).

112-118 lines the ATP pocket; the sequence is GTHGKTT.

The protein belongs to the MurCDEF family.

Its subcellular location is the cytoplasm. It carries out the reaction UDP-N-acetyl-alpha-D-muramate + L-alanine + ATP = UDP-N-acetyl-alpha-D-muramoyl-L-alanine + ADP + phosphate + H(+). Its pathway is cell wall biogenesis; peptidoglycan biosynthesis. Cell wall formation. The polypeptide is UDP-N-acetylmuramate--L-alanine ligase (Ralstonia nicotianae (strain ATCC BAA-1114 / GMI1000) (Ralstonia solanacearum)).